Here is a 225-residue protein sequence, read N- to C-terminus: Small ribosomal subunit protein uS3 (225 aa).

The KH type-2 domain occupies 38–106 (LRGHLRKKLS…DVALNIVEIR (69 aa)).

The protein belongs to the universal ribosomal protein uS3 family. Part of the 30S ribosomal subunit. Forms a tight complex with proteins S10 and S14.

Binds the lower part of the 30S subunit head. Binds mRNA in the 70S ribosome, positioning it for translation. The protein is Small ribosomal subunit protein uS3 of Granulibacter bethesdensis (strain ATCC BAA-1260 / CGDNIH1).